A 503-amino-acid polypeptide reads, in one-letter code: Glycerol kinase (503 aa).

Residue Thr-14 coordinates ADP. ATP-binding residues include Thr-14, Thr-15, and Ser-16. Thr-14 is a binding site for sn-glycerol 3-phosphate. Arg-18 contacts ADP. Positions 84, 85, 136, and 246 each coordinate sn-glycerol 3-phosphate. The glycerol site is built by Arg-84, Glu-85, Tyr-136, Asp-246, and Gln-247. The ADP site is built by Thr-268 and Gly-311. The ATP site is built by Thr-268, Gly-311, Gln-315, and Gly-412. Gly-412 and Asn-416 together coordinate ADP.

Belongs to the FGGY kinase family. Homotetramer and homodimer (in equilibrium). Heterodimer with EIIA-Glc. Binds 1 zinc ion per glycerol kinase EIIA-Glc dimer. The zinc ion is important for dimerization.

It carries out the reaction glycerol + ATP = sn-glycerol 3-phosphate + ADP + H(+). It participates in polyol metabolism; glycerol degradation via glycerol kinase pathway; sn-glycerol 3-phosphate from glycerol: step 1/1. Activity of this regulatory enzyme is affected by several metabolites. Allosterically and non-competitively inhibited by fructose 1,6-bisphosphate (FBP) and unphosphorylated phosphocarrier protein EIIA-Glc (III-Glc), an integral component of the bacterial phosphotransferase (PTS) system. In terms of biological role, key enzyme in the regulation of glycerol uptake and metabolism. Catalyzes the phosphorylation of glycerol to yield sn-glycerol 3-phosphate. The chain is Glycerol kinase from Klebsiella pneumoniae (strain 342).